A 383-amino-acid chain; its full sequence is Polyketide synthase 4 (383 aa).

Cysteine 164 (nucleophile and monoketide coumarate intermediate) is an active-site residue.

This sequence belongs to the thiolase-like superfamily. Chalcone/stilbene synthases family. In terms of assembly, homodimer. In terms of tissue distribution, expressed in fruits.

It carries out the reaction 4-coumaroyl-CoA + malonyl-CoA + H2O + H(+) = 4-hydroxybenzalacetone + 2 CO2 + 2 CoA. The catalysed reaction is (E)-4-coumaroyl-CoA + 3 malonyl-CoA + 3 H(+) = 2',4,4',6'-tetrahydroxychalcone + 3 CO2 + 4 CoA. It participates in secondary metabolite biosynthesis; flavonoid biosynthesis. Inhibited by glutathione. Its function is as follows. Bifunctional polyketide synthase producing both 4-hydroxybenzalacetone and naringenin chalcone. Can use p-coumaryl-CoA and ferulyl-CoA as substrates. Catalyzes the initial key reaction step in the biosynthesis of phenylbutanoids. The polypeptide is Polyketide synthase 4 (PKS4) (Rubus idaeus (Raspberry)).